The primary structure comprises 105 residues: ATP synthase subunit c (105 aa).

A run of 2 helical transmembrane segments spans residues 32–52 (SILG…IGMG) and 78–98 (VAMA…IIAI).

Belongs to the ATPase C chain family. As to quaternary structure, F-type ATPases have 2 components, F(1) - the catalytic core - and F(0) - the membrane proton channel. F(1) has five subunits: alpha(3), beta(3), gamma(1), delta(1), epsilon(1). F(0) has three main subunits: a(1), b(2) and c(10-14). The alpha and beta chains form an alternating ring which encloses part of the gamma chain. F(1) is attached to F(0) by a central stalk formed by the gamma and epsilon chains, while a peripheral stalk is formed by the delta and b chains.

It is found in the cell inner membrane. In terms of biological role, f(1)F(0) ATP synthase produces ATP from ADP in the presence of a proton or sodium gradient. F-type ATPases consist of two structural domains, F(1) containing the extramembraneous catalytic core and F(0) containing the membrane proton channel, linked together by a central stalk and a peripheral stalk. During catalysis, ATP synthesis in the catalytic domain of F(1) is coupled via a rotary mechanism of the central stalk subunits to proton translocation. Functionally, key component of the F(0) channel; it plays a direct role in translocation across the membrane. A homomeric c-ring of between 10-14 subunits forms the central stalk rotor element with the F(1) delta and epsilon subunits. In Helicobacter pylori (strain ATCC 700392 / 26695) (Campylobacter pylori), this protein is ATP synthase subunit c.